We begin with the raw amino-acid sequence, 254 residues long: Hydroxyacylglutathione hydrolase (254 aa).

7 residues coordinate Zn(2+): H53, H55, D57, H58, H111, D128, and H166.

It belongs to the metallo-beta-lactamase superfamily. Glyoxalase II family. In terms of assembly, monomer. Zn(2+) is required as a cofactor.

It carries out the reaction an S-(2-hydroxyacyl)glutathione + H2O = a 2-hydroxy carboxylate + glutathione + H(+). Its pathway is secondary metabolite metabolism; methylglyoxal degradation; (R)-lactate from methylglyoxal: step 2/2. Its function is as follows. Thiolesterase that catalyzes the hydrolysis of S-D-lactoyl-glutathione to form glutathione and D-lactic acid. In Aeromonas salmonicida (strain A449), this protein is Hydroxyacylglutathione hydrolase.